A 404-amino-acid chain; its full sequence is uncharacterized protein (404 aa).

12 helical membrane-spanning segments follow: residues 16-36, 49-69, 79-99, 110-130, 133-153, 166-186, 221-241, 252-272, 283-303, 307-327, 342-362, and 364-384; these read FAFF…QPLM, AASL…LVFG, PIMG…AFSP, IQGV…GEEI, GSLG…AVFG, WHMA…IFFI, FLIG…IVYV, AFSS…SFIG, ILVM…NNML, ILGI…ASSW, LYLF…GLFW, and GFHW…ALWL.

This sequence belongs to the major facilitator superfamily.

The protein localises to the cell membrane. This is an uncharacterized protein from Bacillus subtilis (strain 168).